Reading from the N-terminus, the 174-residue chain is NADH-ubiquinone oxidoreductase chain 6 (174 aa).

4 consecutive transmembrane segments (helical) span residues 24–44, 53–73, 82–102, and 143–163; these read LALG…TGLM, ILFL…TSLA, MKLT…SFIM, and FITI…VKIT.

This sequence belongs to the complex I subunit 6 family.

The protein resides in the mitochondrion membrane. It catalyses the reaction a ubiquinone + NADH + 5 H(+)(in) = a ubiquinol + NAD(+) + 4 H(+)(out). Functionally, core subunit of the mitochondrial membrane respiratory chain NADH dehydrogenase (Complex I) that is believed to belong to the minimal assembly required for catalysis. Complex I functions in the transfer of electrons from NADH to the respiratory chain. The immediate electron acceptor for the enzyme is believed to be ubiquinone. The sequence is that of NADH-ubiquinone oxidoreductase chain 6 (mt:ND6) from Drosophila melanogaster (Fruit fly).